We begin with the raw amino-acid sequence, 189 residues long: Ion-translocating oxidoreductase complex subunit B (189 aa).

The interval 1–26 (MSQVIIAIILLGLLALAFGALLGYAA) is hydrophobic. The 59-residue stretch at 32 to 90 (EGDPIIDQAEALLPQTQCGQCGYPGCRPYAEAIANGEKINKCPPGGTATMEKLAELMGV) folds into the 4Fe-4S domain. Cysteine 49, cysteine 52, cysteine 57, cysteine 73, cysteine 114, cysteine 117, cysteine 120, cysteine 124, cysteine 144, cysteine 147, cysteine 150, and cysteine 154 together coordinate [4Fe-4S] cluster. 4Fe-4S ferredoxin-type domains lie at 105-134 (KVAF…GTGK) and 135-164 (QMHT…MIPV).

The protein belongs to the 4Fe4S bacterial-type ferredoxin family. RnfB subfamily. In terms of assembly, the complex is composed of six subunits: RnfA, RnfB, RnfC, RnfD, RnfE and RnfG. Requires [4Fe-4S] cluster as cofactor.

Its subcellular location is the cell inner membrane. Its function is as follows. Part of a membrane-bound complex that couples electron transfer with translocation of ions across the membrane. This Shewanella loihica (strain ATCC BAA-1088 / PV-4) protein is Ion-translocating oxidoreductase complex subunit B.